The following is a 248-amino-acid chain: 2,3-bisphosphoglycerate-dependent phosphoglycerate mutase (248 aa).

Substrate is bound by residues 8–15 (RHGESEWN), 21–22 (TG), arginine 60, 87–90 (ERHY), lysine 98, 114–115 (RR), and 183–184 (GN). Histidine 9 acts as the Tele-phosphohistidine intermediate in catalysis. Glutamate 87 (proton donor/acceptor) is an active-site residue.

This sequence belongs to the phosphoglycerate mutase family. BPG-dependent PGAM subfamily.

The catalysed reaction is (2R)-2-phosphoglycerate = (2R)-3-phosphoglycerate. The protein operates within carbohydrate degradation; glycolysis; pyruvate from D-glyceraldehyde 3-phosphate: step 3/5. Its function is as follows. Catalyzes the interconversion of 2-phosphoglycerate and 3-phosphoglycerate. This is 2,3-bisphosphoglycerate-dependent phosphoglycerate mutase from Borreliella burgdorferi (strain ATCC 35210 / DSM 4680 / CIP 102532 / B31) (Borrelia burgdorferi).